The chain runs to 127 residues: D-ribose pyranase (127 aa).

Residue H20 is the Proton donor of the active site. Residues D28, H94, and 116 to 118 contribute to the substrate site; that span reads YSN.

The protein belongs to the RbsD / FucU family. RbsD subfamily. In terms of assembly, homodecamer.

It localises to the cytoplasm. The enzyme catalyses beta-D-ribopyranose = beta-D-ribofuranose. It functions in the pathway carbohydrate metabolism; D-ribose degradation; D-ribose 5-phosphate from beta-D-ribopyranose: step 1/2. Its function is as follows. Catalyzes the interconversion of beta-pyran and beta-furan forms of D-ribose. The chain is D-ribose pyranase from Cutibacterium acnes (strain DSM 16379 / KPA171202) (Propionibacterium acnes).